The sequence spans 160 residues: Calcium and integrin-binding family member 3 (160 aa).

EF-hand domains follow at residues 39–74, 76–111, and 117–152; these read KDNPFRQRIAQVFSQDGDGHMTLENFLDMFSVMSEM, PRDLKAYYAFKIYDFNNDNYICAWDLEQTVTRLTRG, and EVTLVCEKVLDEADGDQDGRLSLEDFQNMILRAPDF. Residues aspartate 89, asparagine 91, aspartate 93, tyrosine 95, aspartate 100, aspartate 130, aspartate 132, aspartate 134, arginine 136, and aspartate 141 each coordinate Ca(2+).

In terms of assembly, monomer and homodimer. Interacts with ITGA2B (via C-terminus cytoplasmic tail region); the interaction is stabilized/increased in a calcium and magnesium-dependent manner. Interacts with TMC1. Expressed in heart, liver and inner ear. In the inner ear, expressed in vestibule and basilar membrane cells. Expressed in megakaryocytes and endothelial cells.

Functionally, acts as an auxiliary subunit of the sensory mechanoelectrical transduction (MET) channel in hair cells. Plays a role in regulating hair cell MET channel localization and function. This Mus musculus (Mouse) protein is Calcium and integrin-binding family member 3 (Cib3).